The primary structure comprises 145 residues: Transcription factor MEE8 (145 aa).

Residues 33-49 (EKGVEKVGQKRSAESRR) show a composition bias toward basic and acidic residues. The segment at 33-61 (EKGVEKVGQKRSAESRREGKKKRVKTQCV) is disordered. The bHLH domain maps to 66–115 (DKSDHDTLLKKKRRERIRRQLETLKEITPNCPQSDINAILDCVIEYTNNL).

In terms of assembly, homodimer.

It localises to the nucleus. Required during early embryo development, for the endosperm formation. The polypeptide is Transcription factor MEE8 (MEE8) (Arabidopsis thaliana (Mouse-ear cress)).